The chain runs to 244 residues: 1-(5-phosphoribosyl)-5-[(5-phosphoribosylamino)methylideneamino] imidazole-4-carboxamide isomerase (244 aa).

Asp-8 acts as the Proton acceptor in catalysis. The active-site Proton donor is Asp-129.

It belongs to the HisA/HisF family.

It localises to the cytoplasm. It catalyses the reaction 1-(5-phospho-beta-D-ribosyl)-5-[(5-phospho-beta-D-ribosylamino)methylideneamino]imidazole-4-carboxamide = 5-[(5-phospho-1-deoxy-D-ribulos-1-ylimino)methylamino]-1-(5-phospho-beta-D-ribosyl)imidazole-4-carboxamide. It functions in the pathway amino-acid biosynthesis; L-histidine biosynthesis; L-histidine from 5-phospho-alpha-D-ribose 1-diphosphate: step 4/9. The sequence is that of 1-(5-phosphoribosyl)-5-[(5-phosphoribosylamino)methylideneamino] imidazole-4-carboxamide isomerase from Maricaulis maris (strain MCS10) (Caulobacter maris).